The primary structure comprises 505 residues: Maturase K (505 aa).

Belongs to the intron maturase 2 family. MatK subfamily.

The protein resides in the plastid. The protein localises to the chloroplast. Its function is as follows. Usually encoded in the trnK tRNA gene intron. Probably assists in splicing its own and other chloroplast group II introns. The protein is Maturase K of Nuphar advena (Common spatterdock).